The chain runs to 312 residues: Methionyl-tRNA formyltransferase (312 aa).

(6S)-5,6,7,8-tetrahydrofolate is bound at residue 109-112 (SLLP).

Belongs to the Fmt family.

It catalyses the reaction L-methionyl-tRNA(fMet) + (6R)-10-formyltetrahydrofolate = N-formyl-L-methionyl-tRNA(fMet) + (6S)-5,6,7,8-tetrahydrofolate + H(+). In terms of biological role, attaches a formyl group to the free amino group of methionyl-tRNA(fMet). The formyl group appears to play a dual role in the initiator identity of N-formylmethionyl-tRNA by promoting its recognition by IF2 and preventing the misappropriation of this tRNA by the elongation apparatus. This Anaeromyxobacter dehalogenans (strain 2CP-C) protein is Methionyl-tRNA formyltransferase.